The sequence spans 339 residues: MSNLTPSIAVIGAGSWGTSLAILLAGKGYPVRLWGHNKEHIDRLISDGENSRYLPGISLPESLYPTPSLEKAVLGAQLVLMVVPSHVFRTVFRDLIPFLPIDCQIVSAVKGIENSTLSTMHMVMAQELAAYPALALIELGVISGPSFAKEVAQKQPTAVTVGFASADTAKKVQDIFSTDYFRVYTSTDIDGLEISGAFKNVMAIAAGISDGLSYGSNARAALITRGLAEMQRLGAAMNADPATFAGLSGLGDLLLTCTGDLSRNRNVGLQLGKGHSIEHIESEMFMVAEGVKTTKSFYDLARKLDVETPILDEVYHIIYEGKDCSQAVQDLLGRKLKPE.

Residues Ser15, Trp16, His36, and Lys110 each contribute to the NADPH site. Sn-glycerol 3-phosphate contacts are provided by Lys110, Gly144, and Ser146. Ala148 lines the NADPH pocket. Sn-glycerol 3-phosphate contacts are provided by Lys199, Asp252, Ser262, Arg263, and Asn264. Residue Lys199 is the Proton acceptor of the active site. Residue Arg263 participates in NADPH binding. The NADPH site is built by Val287 and Glu289.

It belongs to the NAD-dependent glycerol-3-phosphate dehydrogenase family.

The protein resides in the cytoplasm. The catalysed reaction is sn-glycerol 3-phosphate + NAD(+) = dihydroxyacetone phosphate + NADH + H(+). The enzyme catalyses sn-glycerol 3-phosphate + NADP(+) = dihydroxyacetone phosphate + NADPH + H(+). It participates in membrane lipid metabolism; glycerophospholipid metabolism. In terms of biological role, catalyzes the reduction of the glycolytic intermediate dihydroxyacetone phosphate (DHAP) to sn-glycerol 3-phosphate (G3P), the key precursor for phospholipid synthesis. In Desulfotalea psychrophila (strain LSv54 / DSM 12343), this protein is Glycerol-3-phosphate dehydrogenase [NAD(P)+].